The sequence spans 96 residues: MVEFSHTKKIGSAGRFGSRYGRKIRVRLRDVEIKQNKDYKCPVCAFPKLKRAGTSIWVCEKCGAKIAGGAYTPETGAGKVVTKAIRRVIESKSREI.

Zn(2+) is bound by residues Cys-41, Cys-44, Cys-59, and Cys-62. The segment at 41–62 (CPVCAFPKLKRAGTSIWVCEKC) adopts a C4-type zinc-finger fold.

Belongs to the eukaryotic ribosomal protein eL43 family. Putative zinc-binding subfamily. Part of the 50S ribosomal subunit. Zn(2+) is required as a cofactor.

In terms of biological role, binds to the 23S rRNA. The sequence is that of Large ribosomal subunit protein eL43 from Methanococcus maripaludis (strain DSM 14266 / JCM 13030 / NBRC 101832 / S2 / LL).